The primary structure comprises 104 residues: Large ribosomal subunit protein uL24 (104 aa).

The protein belongs to the universal ribosomal protein uL24 family. As to quaternary structure, part of the 50S ribosomal subunit.

In terms of biological role, one of two assembly initiator proteins, it binds directly to the 5'-end of the 23S rRNA, where it nucleates assembly of the 50S subunit. One of the proteins that surrounds the polypeptide exit tunnel on the outside of the subunit. The protein is Large ribosomal subunit protein uL24 of Bartonella quintana (strain Toulouse) (Rochalimaea quintana).